The chain runs to 616 residues: MGNDKTNMFVAIALSLVVLLGWHYFVTGPASERQRQAAQSQTAQTGAPQTADGIPSPSPREGGPNAPAPGTLPGAAAQGPVSREDALARSARVRIDTPALYGSIGLKGARIDDVSLKNYHETVSDESPRIVLLSPTGTANPYYAEFGWVGANAGPLPNADTLWKADGDLLAPGRPLTLTWDNGQGLVFKRIVAVDDKFMFTVRDEVENTSANPVTLYPYSLVSRWGKPQTQGYYVLHEGLIGVLGGDGLQEYTYDKVGKEPAYGGAATQGKAWTNVTGGWVGITDKYWAAAAIPEQDKPFTGAFTERTDGATKIYQTSVRGDAVTLAPNASSVTTQRLFAGAKEVNQINAYEREFGIKQFDLMIDWGWFWFLTKPMFRALDFFFHLLGNFGVSILLVTLILKLFFLPIANRSYVSMAKMKAVQPEMTSIRERYKDDRVKQQQAMMELYKKEKINPVAGCWPVLIQIPVFFALYKVLFITIEMRHAPFFGWIQDLAAPDPTSIVNLFGLLPFTPPEYIPIHLGVWPIIMGITMFIQMKMNPAPPDPVQAQVFAFMPIVFTFMLGSFPAGLVIYWAWNNTLSVIQQYVIMRRNGVKVELWDNLRGMFKRGNKSAAAKG.

A helical transmembrane segment spans residues Met-8–Gly-28. Positions Arg-33–Asp-85 are disordered. Composition is skewed to low complexity over residues Gln-36–Ala-51 and Gly-62–Pro-80. 4 helical membrane passes run Leu-386 to Leu-406, Trp-460 to Ile-480, Tyr-516 to Met-536, and Phe-551 to Ile-571.

This sequence belongs to the OXA1/ALB3/YidC family. Type 1 subfamily. Interacts with the Sec translocase complex via SecD. Specifically interacts with transmembrane segments of nascent integral membrane proteins during membrane integration.

The protein resides in the cell inner membrane. Its function is as follows. Required for the insertion and/or proper folding and/or complex formation of integral membrane proteins into the membrane. Involved in integration of membrane proteins that insert both dependently and independently of the Sec translocase complex, as well as at least some lipoproteins. Aids folding of multispanning membrane proteins. The protein is Membrane protein insertase YidC of Methylorubrum extorquens (strain PA1) (Methylobacterium extorquens).